The following is a 176-amino-acid chain: Mitochondrial inner membrane protein Mpv17 (176 aa).

4 helical membrane-spanning segments follow: residues 18–38 (VQVLTAGSLMGLGDVISQQLV), 53–73 (TMASLGCGFVGPVVGGWYRVL), 94–114 (GGFAPCFLGCFLPLVGTLNGL), and 131–151 (LITNYYLWPAVQLANFYLVPL).

This sequence belongs to the peroxisomal membrane protein PXMP2/4 family.

Its subcellular location is the mitochondrion inner membrane. Functionally, non-selective channel that modulates the membrane potential under normal conditions and oxidative stress, and is involved in mitochondrial homeostasis. Involved in mitochondrial deoxynucleoside triphosphates (dNTP) pool homeostasis and mitochondrial DNA (mtDNA) maintenance. May be involved in the regulation of reactive oxygen species metabolism and the control of oxidative phosphorylation. The sequence is that of Mitochondrial inner membrane protein Mpv17 from Bos taurus (Bovine).